A 372-amino-acid polypeptide reads, in one-letter code: Chaperone protein DnaJ (372 aa).

The J domain maps to 5–69 (DYYEVLGVDR…QKKARYDQFG (65 aa)). A CR-type zinc finger spans residues 129 to 211 (GKETEIEIPR…CSGKGKVRKR (83 aa)). Cys142, Cys145, Cys159, Cys162, Cys185, Cys188, Cys199, and Cys202 together coordinate Zn(2+). CXXCXGXG motif repeat units follow at residues 142 to 149 (CGTCHGSG), 159 to 166 (CSHCGGSG), 185 to 192 (CNYCEGTG), and 199 to 206 (CATCSGKG).

The protein belongs to the DnaJ family. As to quaternary structure, homodimer. It depends on Zn(2+) as a cofactor.

The protein resides in the cytoplasm. Functionally, participates actively in the response to hyperosmotic and heat shock by preventing the aggregation of stress-denatured proteins and by disaggregating proteins, also in an autonomous, DnaK-independent fashion. Unfolded proteins bind initially to DnaJ; upon interaction with the DnaJ-bound protein, DnaK hydrolyzes its bound ATP, resulting in the formation of a stable complex. GrpE releases ADP from DnaK; ATP binding to DnaK triggers the release of the substrate protein, thus completing the reaction cycle. Several rounds of ATP-dependent interactions between DnaJ, DnaK and GrpE are required for fully efficient folding. Also involved, together with DnaK and GrpE, in the DNA replication of plasmids through activation of initiation proteins. The polypeptide is Chaperone protein DnaJ (Shouchella clausii (strain KSM-K16) (Alkalihalobacillus clausii)).